The primary structure comprises 901 residues: Sperm-associated antigen 1 (901 aa).

3 TPR repeats span residues 213–246 (ANRE…LPTA), 247–279 (IAYN…DPGN), and 280–313 (VKAL…EPDN). The tract at residues 322 to 437 (EVERDLKNSE…DNPSGLKRRG (116 aa)) is disordered. A phosphoserine mark is found at Ser-351 and Ser-359. TPR repeat units lie at residues 430 to 464 (PSGL…EPTG), 472 to 505 (SILY…HPFS), 507 to 539 (KPLL…DCGI), 606 to 639 (FQAL…NSKA), and 640 to 673 (CAIY…DGEN). Positions 694 to 776 (GVDPSQVLLS…AEPAEKLDVS (83 aa)) are disordered. At Ser-703 the chain carries Phosphoserine. A compositionally biased stretch (basic and acidic residues) spans 708 to 717 (EAARHLDTKN). 2 positions are modified to phosphoserine: Ser-739 and Ser-740. 756–763 (PARDGVED) provides a ligand contact to GTP. At Ser-766 the chain carries Phosphoserine.

As to expression, detected in cerebellum, tongue, esophagus, forestomach, sperm and testis.

Its subcellular location is the cytoplasm. It localises to the dynein axonemal particle. Its function is as follows. May play a role in the cytoplasmic assembly of the ciliary dynein arms. May play a role in fertilization. Binds GTP and has GTPase activity. The protein is Sperm-associated antigen 1 (Spag1) of Mus musculus (Mouse).